The primary structure comprises 725 residues: 1,4-alpha-glucan branching enzyme GlgB (725 aa).

Asp406 (nucleophile) is an active-site residue. The Proton donor role is filled by Glu459.

It belongs to the glycosyl hydrolase 13 family. GlgB subfamily. As to quaternary structure, monomer.

It catalyses the reaction Transfers a segment of a (1-&gt;4)-alpha-D-glucan chain to a primary hydroxy group in a similar glucan chain.. It participates in glycan biosynthesis; glycogen biosynthesis. Functionally, catalyzes the formation of the alpha-1,6-glucosidic linkages in glycogen by scission of a 1,4-alpha-linked oligosaccharide from growing alpha-1,4-glucan chains and the subsequent attachment of the oligosaccharide to the alpha-1,6 position. The protein is 1,4-alpha-glucan branching enzyme GlgB of Methylobacillus flagellatus (strain ATCC 51484 / DSM 6875 / VKM B-1610 / KT).